The chain runs to 226 residues: MKIVAPVMPRNVEEAQSIDVSKYQDVNLIEWRADFLPKEDIVSVAPAIFEKFAGREIIFTLRTSQEGGHITLSDQEYVDLIKEINAIYNPDYIDFEYFSHKAVFHEMLDFPNLVLSYHNFDETPENLMEAFSEMTKLAPRVVKIAVMPQSEQDVLDLMNYTRGFKTLNPEQEFATMSMGRLGRLSRLAGDVVGSSWTFVSLDQASAPGQVSLADMKRILHILESED.

3-dehydroquinate is bound by residues 30 to 32 (EWR) and Arg62. The active-site Proton donor/acceptor is His118. Catalysis depends on Lys143, which acts as the Schiff-base intermediate with substrate. The 3-dehydroquinate site is built by Arg186, Ser205, and Gln209.

Belongs to the type-I 3-dehydroquinase family. In terms of assembly, homodimer.

The catalysed reaction is 3-dehydroquinate = 3-dehydroshikimate + H2O. Its pathway is metabolic intermediate biosynthesis; chorismate biosynthesis; chorismate from D-erythrose 4-phosphate and phosphoenolpyruvate: step 3/7. Functionally, involved in the third step of the chorismate pathway, which leads to the biosynthesis of aromatic amino acids. Catalyzes the cis-dehydration of 3-dehydroquinate (DHQ) and introduces the first double bond of the aromatic ring to yield 3-dehydroshikimate. The sequence is that of 3-dehydroquinate dehydratase from Streptococcus equi subsp. zooepidemicus (strain H70).